The sequence spans 366 residues: MAGSAWVSKVSRLLGAFHNTKQVTRGFAGGVQTVTLIPGDGIGPEISASVMKIFDAAKAPIQWEERNVTAIQGPGGKWMIPPEAKESMDKNKMGLKGPLKTPIAAGHPSMNLLLRKTFDLYANVRPCVSIEGYKTPYTDVNIVTIRENTEGEYSGIEHVIVDGVVQSIKLITEGASKRIAEFAFEYARNNHRSNVTAVHKANIMRMSDGLFLQKCREVAENCKDIKFNEMYLDTVCLNMVQDPSQFDVLVMPNLYGDILSDLCAGLIGGLGVTQSGNIGANGVAIFESVHGTAPDIAGKDMANPTALLLSAVMMLRHMGLFDHAAKIEAACFATIKDGKSLTKDLGGNSKCSDFTEEICRRVKDLD.

A mitochondrion-targeting transit peptide spans 1-27; sequence MAGSAWVSKVSRLLGAFHNTKQVTRGF. An N6-succinyllysine modification is found at lysine 77. Threonine 101 bears the Phosphothreonine mark. Substrate-binding residues include arginine 115, arginine 125, and arginine 146. Lysine 223 carries the post-translational modification N6-acetyllysine. Positions 233, 257, and 261 each coordinate Mg(2+). Lysine 343 bears the N6-acetyllysine; alternate mark. Lysine 343 carries the post-translational modification N6-succinyllysine; alternate. Lysine 350 carries the N6-succinyllysine modification.

It belongs to the isocitrate and isopropylmalate dehydrogenases family. Heterooligomer of subunits alpha (IDH3A), beta (IDH3B), and gamma (IDH3G) in the apparent ratio of 2:1:1. The heterodimer containing one IDH3A and one IDH3B subunit and the heterodimer containing one IDH3A and one IDH3G subunit assemble into a heterotetramer (which contains two subunits of IDH3A, one of IDH3B and one of IDH3G) and further into the heterooctamer. Mg(2+) is required as a cofactor. The cofactor is Mn(2+). Expressed in brown adipose tissue (BAT).

The protein resides in the mitochondrion. It carries out the reaction D-threo-isocitrate + NAD(+) = 2-oxoglutarate + CO2 + NADH. Its activity is regulated as follows. The heterotetramer and the heterodimer composed of IDH3A and IDH3G subunits can be allosterically activated by citrate (CIT) or/and ADP, and the two activators can act independently or synergistically. The heterodimer composed of IDH3A and IDH3B subunits cannot be allosterically regulated and the allosteric regulation of the heterotetramer is through the IDH3G subunit and not the IDH3B subunit. The IDH3G subunit contains the allosteric site which consists of a CIT-binding site and an ADP-binding site, and the binding of CIT and ADP causes conformational changes at the allosteric site which are transmitted to the active site in the catalytic subunit (IDH3A) through a cascade of conformational changes at the heterodimer interface, leading to stabilization of the isocitrate-binding at the active site and thus activation of the enzyme. ATP can activate the heterotetramer and the heterodimer composed of IDH3A and IDH3G subunits at low concentrations but inhibits their activities at high concentrations, whereas ATP exhibits only inhibitory effect on the heterodimer composed of IDH3A and IDH3B subunits. Functionally, catalytic subunit of the enzyme which catalyzes the decarboxylation of isocitrate (ICT) into alpha-ketoglutarate. The heterodimer composed of the alpha (IDH3A) and beta (IDH3B) subunits and the heterodimer composed of the alpha (IDH3A) and gamma (IDH3G) subunits, have considerable basal activity but the full activity of the heterotetramer (containing two subunits of IDH3A, one of IDH3B and one of IDH3G) requires the assembly and cooperative function of both heterodimers. The sequence is that of Isocitrate dehydrogenase [NAD] subunit alpha, mitochondrial from Rattus norvegicus (Rat).